The following is a 160-amino-acid chain: uncharacterized protein (160 aa).

Tyr-49 bears the Phosphotyrosine mark.

In terms of biological role, may be involved in the assembly, structure, or function of the flagellum. May polymerize to form a filamentous structure that is part of the flagellum. This is an uncharacterized protein from Bacillus subtilis (strain 168).